Here is a 261-residue protein sequence, read N- to C-terminus: DNA repair protein RecO (261 aa).

It belongs to the RecO family.

Involved in DNA repair and RecF pathway recombination. This is DNA repair protein RecO from Chlorobium phaeobacteroides (strain BS1).